Consider the following 227-residue polypeptide: Protein CAP22 (227 aa).

2 N-linked (GlcNAc...) asparagine glycosylation sites follow: Asn55 and Asn72. A disordered region spans residues 143 to 162 (TTIGGGATPAPTSERSRTSD).

It localises to the secreted. Its subcellular location is the cell wall. This Colletotrichum gloeosporioides (Anthracnose fungus) protein is Protein CAP22 (CAP22).